A 355-amino-acid chain; its full sequence is Peptide chain release factor 1 (355 aa).

Glutamine 231 carries the N5-methylglutamine modification.

Belongs to the prokaryotic/mitochondrial release factor family. Methylated by PrmC. Methylation increases the termination efficiency of RF1.

The protein localises to the cytoplasm. Peptide chain release factor 1 directs the termination of translation in response to the peptide chain termination codons UAG and UAA. This is Peptide chain release factor 1 from Sulfurovum sp. (strain NBC37-1).